The sequence spans 148 residues: Deoxyuridine 5'-triphosphate nucleotidohydrolase (148 aa).

Residues 67–69 (RSG), Asn80, 84–86 (LID), and Met94 each bind substrate.

The protein belongs to the dUTPase family. Requires Mg(2+) as cofactor.

It carries out the reaction dUTP + H2O = dUMP + diphosphate + H(+). The protein operates within pyrimidine metabolism; dUMP biosynthesis; dUMP from dCTP (dUTP route): step 2/2. Its function is as follows. This enzyme is involved in nucleotide metabolism: it produces dUMP, the immediate precursor of thymidine nucleotides and it decreases the intracellular concentration of dUTP so that uracil cannot be incorporated into DNA. The sequence is that of Deoxyuridine 5'-triphosphate nucleotidohydrolase from Francisella philomiragia subsp. philomiragia (strain ATCC 25017 / CCUG 19701 / FSC 153 / O#319-036).